Consider the following 618-residue polypeptide: Camphene synthase, chloroplastic (618 aa).

The N-terminal 51 residues, 1–51, are a transit peptide targeting the chloroplast; that stretch reads MALLSITPLVSRSCLSSSHEIKALRRTIPTLGICRPGKSVAHSINMCLTSV. Residues aspartate 369, aspartate 373, and aspartate 521 each contribute to the Mg(2+) site. The DDXXD motif signature appears at 369-373; sequence DDMYD.

Belongs to the terpene synthase family. Tpsd subfamily. Mg(2+) is required as a cofactor. The cofactor is Mn(2+). Requires K(+) as cofactor.

Its subcellular location is the plastid. It localises to the chloroplast. The enzyme catalyses (2E)-geranyl diphosphate = (1S,4R)-camphene + diphosphate. It participates in terpene metabolism; oleoresin biosynthesis. Functionally, involved in defensive oleoresin formation in conifers in response to insect attack or other injury. Involved in monoterpene (C10) olefins biosynthesis. The polypeptide is Camphene synthase, chloroplastic (ag6) (Abies grandis (Grand fir)).